Consider the following 223-residue polypeptide: MRLIAALLSVLLIASTAQSTVTIYESSKPGDFDFYLFVQQWIYSYCDSQTCIQNKEREAFTIHGLWPENSDGSYPSFCSGPSFNVNAIQDLEDQLNFDWPSLTGPNTDFWTHEFSKHGTCSITGPITDIHDYFATGIKLYTEFNITAALESENIYPSDSNTYKPVDITNAITTHFGGKPGIQCSSGQLSTVAVCIDKNSLSIMDCPDLQGWSCSGSVKFPSTA.

A signal peptide spans 1-25; it reads MRLIAALLSVLLIASTAQSTVTIYE. A disulfide bond links C46 and C51. Catalysis depends on residues H63, E113, and H117. A disulfide bridge connects residues C78 and C120. The N-linked (GlcNAc...) asparagine glycan is linked to N144. Cystine bridges form between C183–C213 and C194–C205.

The protein belongs to the RNase T2 family.

It localises to the lysosome. It catalyses the reaction a ribonucleotidyl-ribonucleotide-RNA + H2O = a 3'-end 3'-phospho-ribonucleotide-RNA + a 5'-end dephospho-ribonucleoside-RNA + H(+). Its activity is regulated as follows. Inhibited by Cu(2+) and Zn(2+). Releases mononucleotides from RNA in the order of 3'-GMP &gt; 3'-UMP &gt; 3'-AMP &gt; 3'-CMP. This chain is Ribonuclease DdI (ddiA), found in Dictyostelium discoideum (Social amoeba).